Reading from the N-terminus, the 309-residue chain is Large ribosomal subunit protein uL22m (309 aa).

Residues 1-25 (MNFHTARISQVGVISRALLSSVSRR) constitute a mitochondrion transit peptide. The disordered stretch occupies residues 40–63 (SLFGSITENKPKEGKNRGDEDAGS). A compositionally biased stretch (basic and acidic residues) spans 48-59 (NKPKEGKNRGDE).

Belongs to the universal ribosomal protein uL22 family. In terms of assembly, component of the mitochondrial large ribosomal subunit (mt-LSU). Mature yeast 74S mitochondrial ribosomes consist of a small (37S) and a large (54S) subunit. The 37S small subunit contains a 15S ribosomal RNA (15S mt-rRNA) and 34 different proteins. The 54S large subunit contains a 21S rRNA (21S mt-rRNA) and 46 different proteins. uL22m forms the wall of the exit tunnel.

It localises to the mitochondrion. In terms of biological role, component of the mitochondrial ribosome (mitoribosome), a dedicated translation machinery responsible for the synthesis of mitochondrial genome-encoded proteins, including at least some of the essential transmembrane subunits of the mitochondrial respiratory chain. The mitoribosomes are attached to the mitochondrial inner membrane and translation products are cotranslationally integrated into the membrane. The protein is Large ribosomal subunit protein uL22m (MRPL22) of Saccharomyces cerevisiae (strain ATCC 204508 / S288c) (Baker's yeast).